The sequence spans 148 residues: Snaclec convulxin subunit beta (148 aa).

An N-terminal signal peptide occupies residues 1–23; it reads MGRFIFVSFGLLVVFLSLSGSEA. 3 disulfide bridges follow: C27/C38, C55/C144, and C121/C136. A C-type lectin domain is found at 34–148; sequence YDRYCYKVFK…TYSFVCKFEA (115 aa).

The protein belongs to the snaclec family. Tetramer of heterodimers of alpha and beta subunits (alphabeta)(4); disulfide-linked. As to expression, expressed by the venom gland.

It is found in the secreted. Functionally, snake venom lectin that activates platelets by binding to the platelet collagen receptor glycoprotein VI (GP6). The indirect activation of integrin alpha-IIb/beta-3 (ITGA2B/ITGB3) also induced by the toxin is upstream the cytoskeletal translocation of GPIb, FcRgamma (FCER1G) and 14-3-3zeta (YWHAZ). The chain is Snaclec convulxin subunit beta from Crotalus durissus terrificus (South American rattlesnake).